The following is a 69-amino-acid chain: Cecropin-like peptide 1 (69 aa).

The signal sequence occupies residues 1–23 (MNFTKLFVVFAVVLVAFAGQSEA). Gln-68 bears the Glutamine amide mark.

Following bacterial infection, expressed in fat body, trachea and muscle.

It localises to the secreted. Antimicrobial peptide active against Gram-negative bacteria E.coli KCCM 11234 (MIC&lt;=1.03 uM), E.aerogenes KCCM 12177 (MIC&lt;=2.07 uM) and P.aeruginosa KCCM 11328 (MIC&lt;=2.07 uM). Not active against various Gram-positive bacteria at concentrations up to 4.14 uM. The sequence is that of Cecropin-like peptide 1 from Hermetia illucens (Black soldier fly).